Here is an 802-residue protein sequence, read N- to C-terminus: Elongation factor G, mitochondrial (802 aa).

The transit peptide at 1–24 (MRYPSLARLPRRALSGLARAPVRL) directs the protein to the mitochondrion. The region spanning 100–387 (SRVRNIGIAA…GVIDYLPNPS (288 aa)) is the tr-type G domain. GTP is bound by residues 109 to 116 (AHIDSGKT), 185 to 189 (DTPGH), and 239 to 242 (NKMD).

It belongs to the TRAFAC class translation factor GTPase superfamily. Classic translation factor GTPase family. EF-G/EF-2 subfamily.

It is found in the mitochondrion. It participates in protein biosynthesis; polypeptide chain elongation. Mitochondrial GTPase that catalyzes the GTP-dependent ribosomal translocation step during translation elongation. During this step, the ribosome changes from the pre-translocational (PRE) to the post-translocational (POST) state as the newly formed A-site-bound peptidyl-tRNA and P-site-bound deacylated tRNA move to the P and E sites, respectively. Catalyzes the coordinated movement of the two tRNA molecules, the mRNA and conformational changes in the ribosome. This is Elongation factor G, mitochondrial (mef1) from Aspergillus terreus (strain NIH 2624 / FGSC A1156).